Reading from the N-terminus, the 476-residue chain is Ribulose bisphosphate carboxylase large chain (476 aa).

Residues Asn124 and Thr174 each coordinate substrate. Residue Lys176 is the Proton acceptor of the active site. Position 178 (Lys178) interacts with substrate. Residues Lys202, Asp204, and Glu205 each contribute to the Mg(2+) site. An N6-carboxylysine modification is found at Lys202. His295 acts as the Proton acceptor in catalysis. Substrate is bound by residues Arg296, His328, and Ser380.

It belongs to the RuBisCO large chain family. Type I subfamily. As to quaternary structure, heterohexadecamer of 8 large chains and 8 small chains; disulfide-linked. The disulfide link is formed within the large subunit homodimers. Requires Mg(2+) as cofactor. Post-translationally, the disulfide bond which can form in the large chain dimeric partners within the hexadecamer appears to be associated with oxidative stress and protein turnover.

It is found in the carboxysome. The catalysed reaction is 2 (2R)-3-phosphoglycerate + 2 H(+) = D-ribulose 1,5-bisphosphate + CO2 + H2O. The enzyme catalyses D-ribulose 1,5-bisphosphate + O2 = 2-phosphoglycolate + (2R)-3-phosphoglycerate + 2 H(+). Functionally, ruBisCO catalyzes two reactions: the carboxylation of D-ribulose 1,5-bisphosphate, the primary event in carbon dioxide fixation, as well as the oxidative fragmentation of the pentose substrate in the photorespiration process. Both reactions occur simultaneously and in competition at the same active site. In Trichormus variabilis (strain ATCC 29413 / PCC 7937) (Anabaena variabilis), this protein is Ribulose bisphosphate carboxylase large chain.